A 198-amino-acid polypeptide reads, in one-letter code: Outer-membrane lipoprotein carrier protein (198 aa).

The first 16 residues, 1–16 (MKKWLVVFFLSASALA), serve as a signal peptide directing secretion.

The protein belongs to the LolA family. In terms of assembly, monomer.

Its subcellular location is the periplasm. Functionally, participates in the translocation of lipoproteins from the inner membrane to the outer membrane. Only forms a complex with a lipoprotein if the residue after the N-terminal Cys is not an aspartate (The Asp acts as a targeting signal to indicate that the lipoprotein should stay in the inner membrane). The polypeptide is Outer-membrane lipoprotein carrier protein (Vibrio vulnificus (strain YJ016)).